Reading from the N-terminus, the 593-residue chain is Aspartate--tRNA(Asp/Asn) ligase (593 aa).

Residue glutamate 172 participates in L-aspartate binding. The interval 196-199 (QLFK) is aspartate. Arginine 218 is an L-aspartate binding site. Residues 218–220 (RDE) and glutamine 227 contribute to the ATP site. Position 450 (histidine 450) interacts with L-aspartate. Glutamate 484 is an ATP binding site. Arginine 491 contacts L-aspartate. Residue 536–539 (GLDR) coordinates ATP.

This sequence belongs to the class-II aminoacyl-tRNA synthetase family. Type 1 subfamily. As to quaternary structure, homodimer.

The protein resides in the cytoplasm. It catalyses the reaction tRNA(Asx) + L-aspartate + ATP = L-aspartyl-tRNA(Asx) + AMP + diphosphate. In terms of biological role, aspartyl-tRNA synthetase with relaxed tRNA specificity since it is able to aspartylate not only its cognate tRNA(Asp) but also tRNA(Asn). Reaction proceeds in two steps: L-aspartate is first activated by ATP to form Asp-AMP and then transferred to the acceptor end of tRNA(Asp/Asn). The protein is Aspartate--tRNA(Asp/Asn) ligase of Nitrosomonas europaea (strain ATCC 19718 / CIP 103999 / KCTC 2705 / NBRC 14298).